The sequence spans 182 residues: Carbonic anhydrase (182 aa).

Residues H64, H81, and H86 each coordinate Mg(2+).

Belongs to the gamma-class carbonic anhydrase family. In terms of assembly, homotrimer. Mg(2+) is required as a cofactor. Zn(2+) serves as cofactor.

The catalysed reaction is hydrogencarbonate + H(+) = CO2 + H2O. In terms of biological role, reversible hydration of carbon dioxide. The chain is Carbonic anhydrase from Geobacillus kaustophilus (strain HTA426).